A 601-amino-acid polypeptide reads, in one-letter code: Probable HECT-type ubiquitin ligase-interacting protein creD (601 aa).

Disordered regions lie at residues 374–397 (EVDPSGYRTPGPGSGPGTPFGTLS) and 455–489 (SADYFGPSSGSNSHSPASPELSRRPSDEGYHDHDH). Residues 461–473 (PSSGSNSHSPASP) are compositionally biased toward low complexity. The segment covering 475-489 (LSRRPSDEGYHDHDH) has biased composition (basic and acidic residues).

This sequence belongs to the arrestin family. In terms of assembly, interacts with hulA.

Component of the regulatory network controlling carbon source utilization through ubiquitination and deubiquitination involving creA, creB, creC, creD and acrB. May be involved in signaling by recognizing appropriately phosphorylated substrates via its arrestin domains and then recruit a HECT-type ubiquitin ligase such as hulA, leading to ubiquitination of the substrate, providing a link between ubiquitination and phosphorylation in protein regulation and stability. The sequence is that of Probable HECT-type ubiquitin ligase-interacting protein creD (creD) from Neosartorya fischeri (strain ATCC 1020 / DSM 3700 / CBS 544.65 / FGSC A1164 / JCM 1740 / NRRL 181 / WB 181) (Aspergillus fischerianus).